Consider the following 355-residue polypeptide: Uroporphyrinogen decarboxylase (355 aa).

Substrate-binding positions include 27-31 (RQAGR), Asp-77, Tyr-154, Thr-209, and His-327.

This sequence belongs to the uroporphyrinogen decarboxylase family. Homodimer.

The protein localises to the cytoplasm. It carries out the reaction uroporphyrinogen III + 4 H(+) = coproporphyrinogen III + 4 CO2. Its pathway is porphyrin-containing compound metabolism; protoporphyrin-IX biosynthesis; coproporphyrinogen-III from 5-aminolevulinate: step 4/4. Catalyzes the decarboxylation of four acetate groups of uroporphyrinogen-III to yield coproporphyrinogen-III. In Yersinia pestis bv. Antiqua (strain Antiqua), this protein is Uroporphyrinogen decarboxylase.